A 1007-amino-acid polypeptide reads, in one-letter code: Beta-galactosidase A (1007 aa).

A signal peptide spans 1-18 (MKLSSACAIALLAAQAAG). Residues tyrosine 96 and 140 to 142 (NAE) contribute to the substrate site. Residue asparagine 156 is glycosylated (N-linked (GlcNAc...) asparagine). Asparagine 199 is a binding site for substrate. The active-site Proton donor is glutamate 200. 2 cysteine pairs are disulfide-bonded: cysteine 205-cysteine 206 and cysteine 266-cysteine 315. The active-site Nucleophile is glutamate 298. Tyrosine 364 provides a ligand contact to substrate. N-linked (GlcNAc...) asparagine glycosylation is found at asparagine 402, asparagine 422, asparagine 478, asparagine 522, asparagine 622, asparagine 739, asparagine 760, asparagine 777, asparagine 805, and asparagine 914.

Belongs to the glycosyl hydrolase 35 family.

The protein localises to the secreted. The catalysed reaction is Hydrolysis of terminal non-reducing beta-D-galactose residues in beta-D-galactosides.. In terms of biological role, cleaves beta-linked terminal galactosyl residues from gangliosides, glycoproteins, and glycosaminoglycans. This chain is Beta-galactosidase A (lacA), found in Aspergillus niger (strain ATCC MYA-4892 / CBS 513.88 / FGSC A1513).